The chain runs to 141 residues: Hemoglobin subunit alpha-D (141 aa).

The 141-residue stretch at 1–141 (VLTGEDKKHV…VAAVLAEKYR (141 aa)) folds into the Globin domain. 2 residues coordinate heme b: histidine 58 and histidine 87.

This sequence belongs to the globin family. As to quaternary structure, heterotetramer of two alpha-D chains and two beta chains. Red blood cells.

Its function is as follows. Involved in oxygen transport from the lung to the various peripheral tissues. This is Hemoglobin subunit alpha-D (HBAD) from Turdus merula (Common blackbird).